Reading from the N-terminus, the 327-residue chain is ATP-dependent 6-phosphofructokinase (327 aa).

Position 12 (Gly12) interacts with ATP. Residues 22–26 (RGVVR) and 55–60 (RYSVSD) contribute to the ADP site. Residues 73 to 74 (RF) and 103 to 106 (GDGS) each bind ATP. Asp104 provides a ligand contact to Mg(2+). 127 to 129 (TID) contacts substrate. Asp129 acts as the Proton acceptor in catalysis. Arg156 contributes to the ADP binding site. Substrate is bound by residues Arg164 and 171–173 (MGR). Residues 187–189 (GCE), Lys213, and 215–217 (KKH) contribute to the ADP site. Residues Glu224, Arg245, and 251-254 (HIQR) each bind substrate.

This sequence belongs to the phosphofructokinase type A (PFKA) family. ATP-dependent PFK group I subfamily. Prokaryotic clade 'B1' sub-subfamily. In terms of assembly, homotetramer. Requires Mg(2+) as cofactor.

The protein localises to the cytoplasm. It carries out the reaction beta-D-fructose 6-phosphate + ATP = beta-D-fructose 1,6-bisphosphate + ADP + H(+). It functions in the pathway carbohydrate degradation; glycolysis; D-glyceraldehyde 3-phosphate and glycerone phosphate from D-glucose: step 3/4. Allosterically activated by ADP and other diphosphonucleosides, and allosterically inhibited by phosphoenolpyruvate. In terms of biological role, catalyzes the phosphorylation of D-fructose 6-phosphate to fructose 1,6-bisphosphate by ATP, the first committing step of glycolysis. This chain is ATP-dependent 6-phosphofructokinase, found in Hamiltonella defensa subsp. Acyrthosiphon pisum (strain 5AT).